The chain runs to 23 residues: Basic phospholipase A2 homolog Vur-S49 analog (23 aa).

The interval 1 to 23 (SVLEIGLMLQEETEKNPKTSYSI) is disordered.

Contains 7 disulfide bonds. As to expression, expressed by the venom gland.

The protein resides in the secreted. The sequence is that of Basic phospholipase A2 homolog Vur-S49 analog from Vipera renardi (Steppe viper).